A 187-amino-acid chain; its full sequence is BLOC-1-related complex subunit 8 homolog (187 aa).

A disordered region spans residues 165–187; sequence QSQHETANDTRQGYNDDANNDQD.

Belongs to the BORCS8 family.

It localises to the lysosome membrane. In terms of biological role, may participate in the coupling of lysosomes to microtubule plus-end-directed kinesin motor. The sequence is that of BLOC-1-related complex subunit 8 homolog from Nematostella vectensis (Starlet sea anemone).